The primary structure comprises 707 residues: Trans-feruloyl-CoA synthase FCS1 (707 aa).

ATP-binding positions include H267 and 524–535 (ARAIGYPVVMKA). The ATP-grasp domain maps to 498-549 (KELLRPLGIAFPPSQFAANAEAAAAAARAIGYPVVMKAQAAALGHKSDAGGV).

It in the N-terminal section; belongs to the acetate CoA ligase alpha subunit family. This sequence in the C-terminal section; belongs to the acetate CoA ligase beta subunit family. Homodimer.

The catalysed reaction is (E)-ferulate + ATP + CoA = (E)-feruloyl-CoA + ADP + phosphate. Catalyzes the formation of feruloyl-CoA, ADP and phosphate from ferulate, CoA and ATP. This is Trans-feruloyl-CoA synthase FCS1 from Unknown prokaryotic organism.